We begin with the raw amino-acid sequence, 423 residues long: Acetylornithine aminotransferase, mitochondrial (423 aa).

K276 is modified (N6-(pyridoxal phosphate)lysine).

It belongs to the class-III pyridoxal-phosphate-dependent aminotransferase family. It depends on pyridoxal 5'-phosphate as a cofactor.

Its subcellular location is the mitochondrion matrix. The catalysed reaction is N(2)-acetyl-L-ornithine + 2-oxoglutarate = N-acetyl-L-glutamate 5-semialdehyde + L-glutamate. The protein operates within amino-acid biosynthesis; L-arginine biosynthesis; N(2)-acetyl-L-ornithine from L-glutamate: step 4/4. This chain is Acetylornithine aminotransferase, mitochondrial (ARG8), found in Eremothecium gossypii (strain ATCC 10895 / CBS 109.51 / FGSC 9923 / NRRL Y-1056) (Yeast).